The chain runs to 103 residues: Large ribosomal subunit protein bL21 (103 aa).

Belongs to the bacterial ribosomal protein bL21 family. Part of the 50S ribosomal subunit. Contacts protein L20.

Functionally, this protein binds to 23S rRNA in the presence of protein L20. The sequence is that of Large ribosomal subunit protein bL21 from Shewanella amazonensis (strain ATCC BAA-1098 / SB2B).